Reading from the N-terminus, the 338-residue chain is DNA-directed RNA polymerase subunit alpha (338 aa).

Positions 1 to 226 (MLIAQRPTLT…ELFGLARELN (226 aa)) are alpha N-terminal domain (alpha-NTD). The segment at 243-338 (LAADLALPIE…DADYADEQYN (96 aa)) is alpha C-terminal domain (alpha-CTD).

This sequence belongs to the RNA polymerase alpha chain family. Homodimer. The RNAP catalytic core consists of 2 alpha, 1 beta, 1 beta' and 1 omega subunit. When a sigma factor is associated with the core the holoenzyme is formed, which can initiate transcription.

The enzyme catalyses RNA(n) + a ribonucleoside 5'-triphosphate = RNA(n+1) + diphosphate. In terms of biological role, DNA-dependent RNA polymerase catalyzes the transcription of DNA into RNA using the four ribonucleoside triphosphates as substrates. The chain is DNA-directed RNA polymerase subunit alpha from Beutenbergia cavernae (strain ATCC BAA-8 / DSM 12333 / CCUG 43141 / JCM 11478 / NBRC 16432 / NCIMB 13614 / HKI 0122).